We begin with the raw amino-acid sequence, 635 residues long: DNA mismatch repair protein MutL (635 aa).

Belongs to the DNA mismatch repair MutL/HexB family.

This protein is involved in the repair of mismatches in DNA. It is required for dam-dependent methyl-directed DNA mismatch repair. May act as a 'molecular matchmaker', a protein that promotes the formation of a stable complex between two or more DNA-binding proteins in an ATP-dependent manner without itself being part of a final effector complex. The polypeptide is DNA mismatch repair protein MutL (Yersinia pestis bv. Antiqua (strain Angola)).